Here is a 448-residue protein sequence, read N- to C-terminus: Phosphoglucosamine mutase (448 aa).

Ser-100 functions as the Phosphoserine intermediate in the catalytic mechanism. Residues Ser-100, Asp-240, Asp-242, and Asp-244 each coordinate Mg(2+). At Ser-100 the chain carries Phosphoserine.

It belongs to the phosphohexose mutase family. Requires Mg(2+) as cofactor. Post-translationally, activated by phosphorylation.

It catalyses the reaction alpha-D-glucosamine 1-phosphate = D-glucosamine 6-phosphate. In terms of biological role, catalyzes the conversion of glucosamine-6-phosphate to glucosamine-1-phosphate. This chain is Phosphoglucosamine mutase, found in Clostridium acetobutylicum (strain ATCC 824 / DSM 792 / JCM 1419 / IAM 19013 / LMG 5710 / NBRC 13948 / NRRL B-527 / VKM B-1787 / 2291 / W).